A 591-amino-acid chain; its full sequence is L-fucose isomerase (591 aa).

Active-site proton acceptor residues include Glu337 and Asp361. Residues Glu337, Asp361, and His528 each contribute to the Mn(2+) site.

The protein belongs to the L-fucose isomerase family. In terms of assembly, homohexamer. The cofactor is Mn(2+).

Its subcellular location is the cytoplasm. It carries out the reaction L-fucose = L-fuculose. The protein operates within carbohydrate degradation; L-fucose degradation; L-lactaldehyde and glycerone phosphate from L-fucose: step 1/3. Functionally, converts the aldose L-fucose into the corresponding ketose L-fuculose. This chain is L-fucose isomerase, found in Salmonella heidelberg (strain SL476).